The chain runs to 235 residues: Uracil-DNA glycosylase (235 aa).

Residue Asp-71 is the Proton acceptor of the active site.

Belongs to the uracil-DNA glycosylase (UDG) superfamily. UNG family.

It localises to the cytoplasm. The enzyme catalyses Hydrolyzes single-stranded DNA or mismatched double-stranded DNA and polynucleotides, releasing free uracil.. Functionally, excises uracil residues from the DNA which can arise as a result of misincorporation of dUMP residues by DNA polymerase or due to deamination of cytosine. In Campylobacter hominis (strain ATCC BAA-381 / DSM 21671 / CCUG 45161 / LMG 19568 / NCTC 13146 / CH001A), this protein is Uracil-DNA glycosylase.